Reading from the N-terminus, the 531-residue chain is Zinc finger protein 692 (531 aa).

Over residues 155 to 178 (EAQGLECEQRERTQETRLSRRVDS) the composition is skewed to basic and acidic residues. Disordered regions lie at residues 155–249 (EAQG…PATL) and 287–307 (MTESLESPGSQAQSAPNPTWD). The span at 186–206 (LGEDQDVEEEEEEEEEEEELL) shows a compositional bias: acidic residues. Position 231 is a phosphoserine (S231). Over residues 290 to 303 (SLESPGSQAQSAPN) the composition is skewed to polar residues. 5 C2H2-type zinc fingers span residues 327–352 (MPCDFPGCGRIFSNRQYLNHHKKYQH), 358–382 (FCCPEPACGKSFNFKKHLKEHVKLH), 388–410 (YICEFCARSFRTSSNLVIHRRIH), 416–438 (LQCEICGFTCRQKASLNWHRRKH), and 447–470 (FPCEFCGKRFEKPDSVVAHCSKSH). S469 bears the Phosphoserine mark. A disordered region spans residues 474–531 (LPAQEPPGSLVSSPSISAPESLQSPEGASISTTSDSNPASSTSISSPGVPDPRNREKS). Positions 483 to 499 (LVSSPSISAPESLQSPE) are enriched in polar residues. Residues 502 to 520 (SISTTSDSNPASSTSISSP) show a composition bias toward low complexity.

It belongs to the krueppel C2H2-type zinc-finger protein family. Post-translationally, phosphorylation at Ser-469 results in loss of DNA-binding activity.

The protein resides in the nucleus. May act as an transcriptional repressor for PCK1 gene expression, in turn may participate in the hepatic gluconeogenesis regulation through the activated AMPK signaling pathway. The sequence is that of Zinc finger protein 692 from Mus musculus (Mouse).